A 309-amino-acid polypeptide reads, in one-letter code: Ferrochelatase (309 aa).

H187 and E265 together coordinate Fe cation.

The protein belongs to the ferrochelatase family.

Its subcellular location is the cytoplasm. It catalyses the reaction heme b + 2 H(+) = protoporphyrin IX + Fe(2+). Its pathway is porphyrin-containing compound metabolism; protoheme biosynthesis; protoheme from protoporphyrin-IX: step 1/1. Catalyzes the ferrous insertion into protoporphyrin IX. The sequence is that of Ferrochelatase from Nitratiruptor sp. (strain SB155-2).